Consider the following 503-residue polypeptide: MALGRAFSVAVRGLDGEIVEIEADITSGLPGVHLVGLPDAALQESRDRVRAAVTNCGNSWPMARLTLALSPATLPKMGSVYDIALAAAVLSAQQKKPWERLENTLLLGELSLDGRVRPVRGVLPAVLAAKRDGWPAVVVPADNLPEASLVDGIDVRGVRTLGQLQSWLRGSTGLAGRITTADTTPESAADLADVVGQSQARFAVEVAAAGAHHLMLTVPPGVGKTMLAQRLPGLLPSLSGSESLEVTAIHSVAGLLSGDTPLITRPPFVAPHHSSSVAALVGGGSGMARPGAVSRAHRGVLFLDECAEISLSALEALRTPLEDGEIRLARRDGVACYPARFQLVLAANPCPCAPADPQDCICAAATKRRYLGKLSGPLLDRVDLRVQMHRLRAGAFSAADGESTSQVRQRVALAREAAAQRWRPHGFRTNAEVSGPLLRRKFRPSSAAMLPLRTALDRGLLSIRGVDRTLRVAWSLADLAGRTSPGIDEVAAALSFRQTGARR.

It belongs to the Mg-chelatase subunits D/I family. ComM subfamily.

This is an uncharacterized protein from Mycobacterium tuberculosis (strain CDC 1551 / Oshkosh).